A 260-amino-acid polypeptide reads, in one-letter code: Isoprenyl transferase (260 aa).

Residue Asp-40 is part of the active site. Asp-40 contacts Mg(2+). Substrate-binding positions include 41–44 (GNGR), Trp-45, Arg-53, His-57, and 85–87 (STE). The active-site Proton acceptor is the Asn-88. Substrate contacts are provided by residues Trp-89, Arg-91, Arg-208, and 214 to 216 (RLS). Glu-227 contributes to the Mg(2+) binding site.

It belongs to the UPP synthase family. As to quaternary structure, homodimer. Mg(2+) serves as cofactor.

Functionally, catalyzes the condensation of isopentenyl diphosphate (IPP) with allylic pyrophosphates generating different type of terpenoids. The protein is Isoprenyl transferase of Bacillus subtilis (strain 168).